The following is a 553-amino-acid chain: Flotillin family inner membrane protein YqiK (553 aa).

Over 1-9 (MDDIVNSVP) the chain is Periplasmic. A helical membrane pass occupies residues 10–30 (SWMFTAIIAVCILFIIGIIFA). Over 31-553 (RLYRRASAEQ…STTPVEEKAE (523 aa)) the chain is Cytoplasmic.

Belongs to the band 7/mec-2 family. Flotillin subfamily. As to quaternary structure, homooligomerizes.

It is found in the cell inner membrane. It localises to the membrane raft. Functionally, found in membrane microdomains that may be equivalent to eukaryotic membrane rafts. FMMs are highly dynamic and increase in number as cells age. Flotillins are thought to be important factors in membrane fluidity. The protein is Flotillin family inner membrane protein YqiK (yqiK) of Escherichia coli (strain K12).